Reading from the N-terminus, the 396-residue chain is GTPase Obg (396 aa).

An Obg domain is found at 1–159 (MKFVDEASIY…RTLKLEMKVL (159 aa)). The segment at 120 to 146 (GGHHGLGNTRFKSSTNRAPRQTTKGTV) is disordered. Residues 129–144 (RFKSSTNRAPRQTTKG) show a composition bias toward polar residues. Residues 160 to 333 (ADVGLLGLPN…LCLDLMTALD (174 aa)) form the OBG-type G domain. GTP is bound by residues 166-173 (GLPNAGKS), 191-195 (FTTLV), 213-216 (DIPG), 283-286 (NKTD), and 314-316 (SAI). The Mg(2+) site is built by Ser173 and Thr193.

This sequence belongs to the TRAFAC class OBG-HflX-like GTPase superfamily. OBG GTPase family. As to quaternary structure, monomer. It depends on Mg(2+) as a cofactor.

Its subcellular location is the cytoplasm. Its function is as follows. An essential GTPase which binds GTP, GDP and possibly (p)ppGpp with moderate affinity, with high nucleotide exchange rates and a fairly low GTP hydrolysis rate. Plays a role in control of the cell cycle, stress response, ribosome biogenesis and in those bacteria that undergo differentiation, in morphogenesis control. In Marinomonas sp. (strain MWYL1), this protein is GTPase Obg.